Reading from the N-terminus, the 163-residue chain is C-type lectin lectoxin-Lio1 (163 aa).

A signal peptide spans 1 to 21 (MERFIFAALLVVALSLSGTGA). Cystine bridges form between C25-C36, C53-C152, and C127-C144. In terms of domain architecture, C-type lectin spans 32 to 153 (SDGYCYKVFK…CRSKRYFICK (122 aa)). Positions 117-119 (EPN) match the Mannose-binding motif. Positions 125 and 141 each coordinate Ca(2+).

This sequence belongs to the true venom lectin family. Expressed by the venom gland.

It is found in the secreted. In terms of biological role, mannose-binding lectin which recognizes specific carbohydrate structures and agglutinates a variety of animal cells by binding to cell-surface glycoproteins and glycolipids. May be a calcium-dependent lectin. The sequence is that of C-type lectin lectoxin-Lio1 from Erythrolamprus poecilogyrus (Water snake).